The sequence spans 489 residues: Dentin matrix acidic phosphoprotein 1 (489 aa).

Residues 1 to 16 (MKTVILLTFLWGLSCA) form the signal peptide. The tract at residues 22–489 (YQNTESESSE…QDDNDCQDGY (468 aa)) is disordered. Positions 82 to 100 (DKEEDEDDSGDDTFGDEDN) are enriched in acidic residues. Low complexity predominate over residues 123 to 138 (DTTQSSEDSTSQENSA). Basic and acidic residues-rich tracts occupy residues 143–159 (SDSKDHHSDEADSRPEA) and 217–227 (RSEESKGDHEP). Positions 263-274 (DSNSRETQSVST) are enriched in polar residues. Residues 275–287 (EDFRSKEESRSET) show a composition bias toward basic and acidic residues. Positions 316 to 332 (EPSQESSSESQEGVASE) are enriched in low complexity. The short motif at 334 to 336 (RGD) is the Cell attachment site element. N-linked (GlcNAc...) asparagine glycosylation is present at Asn-340. A compositionally biased stretch (basic and acidic residues) spans 346-358 (DQRDSESSEEDRL). A glycan (N-linked (GlcNAc...) asparagine) is linked at Asn-378. Residues 386 to 397 (ESQESAQDEDSS) show a composition bias toward acidic residues. A compositionally biased stretch (low complexity) spans 398–419 (SQEGLQSQSASRESRSQESQSE). Residues 420–442 (QDSRSEENRDSDSQDSSRSKEES) are compositionally biased toward basic and acidic residues. N-linked (GlcNAc...) asparagine glycosylation occurs at Asn-443. The span at 453-478 (EDNHPKNIEADNRKLIVDAYHNKPIG) shows a compositional bias: basic and acidic residues. A compositionally biased stretch (acidic residues) spans 479 to 489 (DQDDNDCQDGY).

In terms of assembly, interacts with importin alpha. Phosphorylated in the cytosol and extracellular matrix and unphosphorylated in the nucleus. Phosphorylation is necessary for nucleocytoplasmic transport and may be catalyzed by a nuclear isoform of CK2 and can be augmented by calcium. Phosphorylated (in vitro) by FAM20C in the extracellular medium at sites within the S-x-E/pS motif. As to expression, expressed in tooth particularly in odontoblast and ameloblast.

The protein localises to the nucleus. The protein resides in the cytoplasm. It localises to the secreted. It is found in the extracellular space. Its subcellular location is the extracellular matrix. Functionally, may have a dual function during osteoblast differentiation. In the nucleus of undifferentiated osteoblasts, unphosphorylated form acts as a transcriptional component for activation of osteoblast-specific genes like osteocalcin. During the osteoblast to osteocyte transition phase it is phosphorylated and exported into the extracellular matrix, where it regulates nucleation of hydroxyapatite. The protein is Dentin matrix acidic phosphoprotein 1 (Dmp1) of Rattus norvegicus (Rat).